The chain runs to 88 residues: U-scoloptoxin(XY)-Er1a (88 aa).

The first 24 residues, 1 to 24 (MASQVVLSFALVVVLAVFVGQVDS), serve as a signal peptide directing secretion. Residues 66-88 (RPELSPGAWDDSSEEKDNEASLA) are disordered. The propeptide occupies 79–88 (EEKDNEASLA).

This sequence belongs to the scoloptoxin-XY family. Post-translationally, contains 3 disulfide bonds. Expressed by the venom gland.

It localises to the secreted. The protein is U-scoloptoxin(XY)-Er1a of Ethmostigmus rubripes (Giant centipede).